The following is a 188-amino-acid chain: Multiple organellar RNA editing factor 7, mitochondrial (188 aa).

The transit peptide at 1 to 20 (MARIIRRPLNLTAAVRFRLS) directs the protein to the mitochondrion. The segment at 169–188 (DAKSGVVKKKHRRKRKKKLI) is disordered. Over residues 174 to 188 (VVKKKHRRKRKKKLI) the composition is skewed to basic residues.

The protein belongs to the MORF family. As to quaternary structure, heterodimers with MORF8/RIP1, MORF5/RIP5 and MORF6/RIP6.

Its subcellular location is the mitochondrion. Functionally, involved in organellar RNA editing. Required for the processing of few RNA editing sites in mitochondria. This Arabidopsis thaliana (Mouse-ear cress) protein is Multiple organellar RNA editing factor 7, mitochondrial.